The sequence spans 360 residues: Phospho-N-acetylmuramoyl-pentapeptide-transferase (360 aa).

10 helical membrane passes run alanine 26–alanine 46, proline 72–tyrosine 92, serine 94–valine 114, tryptophan 132–glycine 152, valine 168–serine 188, glycine 199–threonine 219, alanine 236–phenylalanine 256, valine 263–leucine 283, phenylalanine 288–valine 308, and valine 338–lysine 358.

Belongs to the glycosyltransferase 4 family. MraY subfamily. It depends on Mg(2+) as a cofactor.

It is found in the cell inner membrane. It catalyses the reaction UDP-N-acetyl-alpha-D-muramoyl-L-alanyl-gamma-D-glutamyl-meso-2,6-diaminopimeloyl-D-alanyl-D-alanine + di-trans,octa-cis-undecaprenyl phosphate = di-trans,octa-cis-undecaprenyl diphospho-N-acetyl-alpha-D-muramoyl-L-alanyl-D-glutamyl-meso-2,6-diaminopimeloyl-D-alanyl-D-alanine + UMP. The protein operates within cell wall biogenesis; peptidoglycan biosynthesis. In terms of biological role, catalyzes the initial step of the lipid cycle reactions in the biosynthesis of the cell wall peptidoglycan: transfers peptidoglycan precursor phospho-MurNAc-pentapeptide from UDP-MurNAc-pentapeptide onto the lipid carrier undecaprenyl phosphate, yielding undecaprenyl-pyrophosphoryl-MurNAc-pentapeptide, known as lipid I. This chain is Phospho-N-acetylmuramoyl-pentapeptide-transferase, found in Erwinia tasmaniensis (strain DSM 17950 / CFBP 7177 / CIP 109463 / NCPPB 4357 / Et1/99).